The chain runs to 124 residues: Glycine cleavage system H protein (124 aa).

Residues 22 to 104 (TATVGITDFA…YGDGWMIEIE (83 aa)) form the Lipoyl-binding domain. N6-lipoyllysine is present on lysine 63.

The protein belongs to the GcvH family. In terms of assembly, the glycine cleavage system is composed of four proteins: P, T, L and H. Requires (R)-lipoate as cofactor.

In terms of biological role, the glycine cleavage system catalyzes the degradation of glycine. The H protein shuttles the methylamine group of glycine from the P protein to the T protein. The protein is Glycine cleavage system H protein of Salinibacter ruber (strain DSM 13855 / M31).